A 100-amino-acid chain; its full sequence is Small ribosomal subunit protein uS14c (100 aa).

It belongs to the universal ribosomal protein uS14 family. As to quaternary structure, part of the 30S ribosomal subunit.

The protein resides in the plastid. Its subcellular location is the chloroplast. Its function is as follows. Binds 16S rRNA, required for the assembly of 30S particles. The protein is Small ribosomal subunit protein uS14c of Trieres chinensis (Marine centric diatom).